A 413-amino-acid chain; its full sequence is Aspartate aminotransferase, cytoplasmic (413 aa).

2 residues coordinate L-aspartate: Gly39 and Trp141. Ser149 is modified (phosphoserine). An L-aspartate-binding site is contributed by Asn195. Lys259 bears the N6-(pyridoxal phosphate)lysine mark. Position 387 (Arg387) interacts with L-aspartate.

The protein belongs to the class-I pyridoxal-phosphate-dependent aminotransferase family. In terms of assembly, homodimer. The cofactor is pyridoxal 5'-phosphate.

Its subcellular location is the cytoplasm. The enzyme catalyses L-aspartate + 2-oxoglutarate = oxaloacetate + L-glutamate. It carries out the reaction L-cysteine + 2-oxoglutarate = 2-oxo-3-sulfanylpropanoate + L-glutamate. The catalysed reaction is (2S)-2-aminobutanoate + 2-oxoglutarate = 2-oxobutanoate + L-glutamate. It catalyses the reaction 3-sulfino-L-alanine + 2-oxoglutarate = 3-sulfinopyruvate + L-glutamate. Functionally, biosynthesis of L-glutamate from L-aspartate or L-cysteine. Important regulator of levels of glutamate, the major excitatory neurotransmitter of the vertebrate central nervous system. Acts as a scavenger of glutamate in brain neuroprotection. The aspartate aminotransferase activity is involved in hepatic glucose synthesis during development and in adipocyte glyceroneogenesis. Using L-cysteine as substrate, regulates levels of mercaptopyruvate, an important source of hydrogen sulfide. Mercaptopyruvate is converted into H(2)S via the action of 3-mercaptopyruvate sulfurtransferase (3MST). Hydrogen sulfide is an important synaptic modulator and neuroprotectant in the brain. The polypeptide is Aspartate aminotransferase, cytoplasmic (Pan troglodytes (Chimpanzee)).